A 2238-amino-acid chain; its full sequence is RNA-directed RNA polymerase L (2238 aa).

The tract at residues 26–284 is endonuclease; it reads ITLVTCQNDA…THHSEHPVDC (259 aa). Mn(2+)-binding residues include glutamate 51, aspartate 89, and glutamate 102. Lysine 115 is an active-site residue. Residues 1188-1387 enclose the RdRp catalytic domain; sequence TDMKMCVNLG…FISTKFNKFV (200 aa). Aspartate 1346 lines the Mg(2+) pocket.

This sequence belongs to the Bunyavirales RNA polymerase family. As to quaternary structure, homomultimer; the oligomeric structure is essential for the polymerase activity. Interacts with nucleoprotein N. Interacts with protein Z; this interaction inhibits viral transcription and replication, Z partially blocks the product exit tunnel for the releasing nascent RNA product. Mn(2+) serves as cofactor. Mg(2+) is required as a cofactor.

The protein resides in the virion. It localises to the host cytoplasm. It carries out the reaction RNA(n) + a ribonucleoside 5'-triphosphate = RNA(n+1) + diphosphate. Its function is as follows. RNA-dependent RNA polymerase, which is responsible for the replication and transcription of the viral RNA genome using antigenomic RNA as an intermediate. During transcription, synthesizes subgenomic RNAs and assures their capping by a cap-snatching mechanism, which involves the endonuclease activity cleaving the host capped pre-mRNAs. These short capped RNAs are then used as primers for viral transcription. The 3'-end of subgenomic mRNAs molecules are heterogeneous and not polyadenylated. The replicase function is to direct synthesis of antigenomic and genomic RNA which are encapsidated and non capped. As a consequence of the use of the same enzyme for both transcription and replication, these mechanisms need to be well coordinated. These processes may be regulated by proteins N and Z in a dose-dependent manner. Z protein inhibits the viral polymerase L und thus the viral transcription and RNA synthesis. The protein is RNA-directed RNA polymerase L of Calomys callosus (Large vesper mouse).